The primary structure comprises 163 residues: ADP-ribosylation factor-like protein 2-binding protein (163 aa).

It belongs to the ARL2BP family. In terms of assembly, interacts with GTP bound ARL2 and ARL3; the complex ARL2-ARL2BP as well as ARL2BP alone, binds to SLC25A4/ANT1. Interaction with ARL2 may be required for targeting to cilia basal body. Interacts with STAT3; interaction is enhanced with ARL2. Found in a complex with ARL2BP, ARL2 and SLC25A6. Found in a complex with ARL2, ARL2BP and SLC25A4. Interacts with STAT2, STAT3 and STAT4. In terms of tissue distribution, widely expressed, with most abundant activity in brain, especially in hippocampus and cortex. Also expressed in lung, cerebellum, liver, kidney, retina, spleen, muscle and heart (at protein level).

Its subcellular location is the cytoplasm. It is found in the mitochondrion intermembrane space. It localises to the cytoskeleton. The protein resides in the microtubule organizing center. The protein localises to the centrosome. Its subcellular location is the nucleus. It is found in the cilium basal body. In terms of biological role, together with ARL2, plays a role in the nuclear translocation, retention and transcriptional activity of STAT3. May play a role as an effector of ARL2. This chain is ADP-ribosylation factor-like protein 2-binding protein (Arl2bp), found in Mus musculus (Mouse).